A 461-amino-acid polypeptide reads, in one-letter code: Bifunctional protein HldE (461 aa).

A ribokinase region spans residues 1–311 (MKKILVVGDL…EEIALILNQT (311 aa)). Position 191–194 (191–194 (NRAE)) interacts with ATP. Residue D260 is part of the active site. The cytidylyltransferase stretch occupies residues 332-461 (FTNGCFDLLH…IEKIKRTHND (130 aa)).

This sequence in the N-terminal section; belongs to the carbohydrate kinase PfkB family. It in the C-terminal section; belongs to the cytidylyltransferase family. In terms of assembly, homodimer.

It catalyses the reaction D-glycero-beta-D-manno-heptose 7-phosphate + ATP = D-glycero-beta-D-manno-heptose 1,7-bisphosphate + ADP + H(+). It carries out the reaction D-glycero-beta-D-manno-heptose 1-phosphate + ATP + H(+) = ADP-D-glycero-beta-D-manno-heptose + diphosphate. Its pathway is nucleotide-sugar biosynthesis; ADP-L-glycero-beta-D-manno-heptose biosynthesis; ADP-L-glycero-beta-D-manno-heptose from D-glycero-beta-D-manno-heptose 7-phosphate: step 1/4. The protein operates within nucleotide-sugar biosynthesis; ADP-L-glycero-beta-D-manno-heptose biosynthesis; ADP-L-glycero-beta-D-manno-heptose from D-glycero-beta-D-manno-heptose 7-phosphate: step 3/4. Its function is as follows. Catalyzes the phosphorylation of D-glycero-D-manno-heptose 7-phosphate at the C-1 position to selectively form D-glycero-beta-D-manno-heptose-1,7-bisphosphate. Catalyzes the ADP transfer from ATP to D-glycero-beta-D-manno-heptose 1-phosphate, yielding ADP-D-glycero-beta-D-manno-heptose. The protein is Bifunctional protein HldE of Helicobacter pylori (strain P12).